The sequence spans 363 residues: 3-dehydroquinate synthase (363 aa).

NAD(+)-binding positions include 109-113, 133-134, K146, and K155; these read GATTD and TT. E188, H251, and H267 together coordinate Zn(2+).

Belongs to the sugar phosphate cyclases superfamily. Dehydroquinate synthase family. Requires NAD(+) as cofactor. It depends on Co(2+) as a cofactor. The cofactor is Zn(2+).

It localises to the cytoplasm. The catalysed reaction is 7-phospho-2-dehydro-3-deoxy-D-arabino-heptonate = 3-dehydroquinate + phosphate. It functions in the pathway metabolic intermediate biosynthesis; chorismate biosynthesis; chorismate from D-erythrose 4-phosphate and phosphoenolpyruvate: step 2/7. Its function is as follows. Catalyzes the conversion of 3-deoxy-D-arabino-heptulosonate 7-phosphate (DAHP) to dehydroquinate (DHQ). The polypeptide is 3-dehydroquinate synthase (Streptomyces avermitilis (strain ATCC 31267 / DSM 46492 / JCM 5070 / NBRC 14893 / NCIMB 12804 / NRRL 8165 / MA-4680)).